Reading from the N-terminus, the 41-residue chain is Mu-conotoxin pn4c (41 aa).

A propeptide spanning residues 1–24 is cleaved from the precursor; sequence DQPAERMQDDISSEHHPFFDPVKR.

The protein belongs to the conotoxin M superfamily. Post-translationally, contains 3 disulfide bonds. They are not added, since framework IV presents two different connectivities (I-V, II-III, IV-VI and I-III, II-V, IV-VI). In terms of tissue distribution, expressed by the venom duct.

The protein localises to the secreted. Functionally, mu-conotoxins block voltage-gated sodium channels (Nav). Blocks reversibly sodium channels in molluskan neurons, but has no effect on sodium currents in bovine chromaffin cells or in rat brain synaptosomes. Induces paralysis in mollusks (C.retripictus). The sequence is that of Mu-conotoxin pn4c from Conus pennaceus (Feathered cone).